A 231-amino-acid polypeptide reads, in one-letter code: Probable GTP-binding protein EngB (231 aa).

In terms of domain architecture, EngB-type G spans 51–231; it reads DLSEIAFAGR…RAQLAALASP (181 aa). GTP contacts are provided by residues 59-66, 86-90, 109-112, 176-179, and 210-212; these read GRSNVGKS, GRTQE, DLPG, TKAD, and TSS. Residues Ser-66 and Thr-88 each contribute to the Mg(2+) site.

It belongs to the TRAFAC class TrmE-Era-EngA-EngB-Septin-like GTPase superfamily. EngB GTPase family. Requires Mg(2+) as cofactor.

Necessary for normal cell division and for the maintenance of normal septation. This is Probable GTP-binding protein EngB from Rhodospirillum rubrum (strain ATCC 11170 / ATH 1.1.1 / DSM 467 / LMG 4362 / NCIMB 8255 / S1).